Reading from the N-terminus, the 372-residue chain is Formylglycine-generating enzyme (372 aa).

The first 31 residues, 1–31 (MAAPAREPALRCCIRLARVFLLLVLACEVAG), serve as a signal peptide directing secretion. Cys-48 and Cys-50 form a disulfide bridge. Positions 61-80 (SSAAAQRYSREANAPGLTSG) are disordered. Ca(2+) is bound at residue Glu-128. A glycan (N-linked (GlcNAc...) asparagine) is linked at Asn-139. 2 disulfide bridges follow: Cys-216-Cys-363 and Cys-233-Cys-344. Residues Asn-257, Ile-258, Asp-271, Phe-273, Asn-291, Gly-294, and Glu-298 each coordinate Ca(2+). Residues Cys-334 and Cys-339 each contribute to the Cu(2+) site. An interaction with sulfatases region spans residues 339–358 (CYRYRCAARSQNTPDSSASN).

This sequence belongs to the sulfatase-modifying factor family. Monomer, homodimer and heterodimer with SUMF2. It depends on Cu(2+) as a cofactor. In terms of processing, N-glycosylated. Contains high-mannose-type oligosaccharides.

It is found in the endoplasmic reticulum lumen. It catalyses the reaction L-cysteinyl-[sulfatase] + 2 a thiol + O2 = an organic disulfide + 3-oxo-L-alanyl-[sulfatase] + hydrogen sulfide + H2O + H(+). Its pathway is protein modification; sulfatase oxidation. Functionally, oxidase that catalyzes the conversion of cysteine to 3-oxoalanine on target proteins, using molecular oxygen and an unidentified reducing agent. 3-oxoalanine modification, which is also named formylglycine (fGly), occurs in the maturation of arylsulfatases and some alkaline phosphatases that use the hydrated form of 3-oxoalanine as a catalytic nucleophile. Known substrates include GALNS, ARSA, STS and ARSE. The chain is Formylglycine-generating enzyme from Mus musculus (Mouse).